Consider the following 1205-residue polypeptide: A disintegrin and metalloproteinase with thrombospondin motifs 2 (1205 aa).

The signal sequence occupies residues 1 to 28 (MDPPAGAAGRLLCPALLLLLLLPLPADA). Residues 29 to 253 (RLAAAAADPP…VNSSRRRMRR (225 aa)) constitute a propeptide that is removed on maturation. N-linked (GlcNAc...) asparagine glycans are attached at residues asparagine 104 and asparagine 245. The 205-residue stretch at 260–464 (YNIEVLLGVD…HSYDCLRDDP (205 aa)) folds into the Peptidase M12B domain. Disulfide bonds link cysteine 337-cysteine 386, cysteine 380-cysteine 459, cysteine 419-cysteine 445, cysteine 486-cysteine 511, cysteine 497-cysteine 520, cysteine 506-cysteine 539, cysteine 533-cysteine 544, cysteine 567-cysteine 604, cysteine 571-cysteine 609, and cysteine 582-cysteine 594. Histidine 402 serves as a coordination point for Zn(2+). The active site involves glutamate 403. 2 residues coordinate Zn(2+): histidine 406 and histidine 412. The region spanning 474 to 554 (QLPGLHYSMN…IWLTPDILKR (81 aa)) is the Disintegrin domain. The TSP type-1 1 domain maps to 555–610 (DGNWGAWSPFGSCSRTCGTGVKFRTRQCDNPHPANGGRTCSGLAYDFQLCNSQDCP). A Cell attachment site motif is present at residues 685 to 687 (RGD). The tract at residues 717–845 (KVVKGTFSRS…NVDDNNVLED (129 aa)) is spacer. 3 TSP type-1 domains span residues 848-906 (VGYE…NPQE), 908-968 (SQPV…NREL), and 969-1023 (CPGR…GPCP). Residues asparagine 942, asparagine 943, and asparagine 987 are each glycosylated (N-linked (GlcNAc...) asparagine). Disulfide bonds link cysteine 981–cysteine 1017, cysteine 985–cysteine 1022, and cysteine 996–cysteine 1006. Residue asparagine 1025 is glycosylated (N-linked (GlcNAc...) asparagine). One can recognise a PLAC domain in the interval 1053 to 1091 (SKGRCQGDKSVFCRMEVLSRYCSIPGYNKLCCKSCNPHD). 3 N-linked (GlcNAc...) asparagine glycosylation sites follow: asparagine 1092, asparagine 1139, and asparagine 1144. A disordered region spans residues 1163-1184 (GLEDEVQPPNLIPRRPSPYEKT).

In terms of assembly, may belong to a multimeric complex. Binds specifically to collagen type XIV. The cofactor is Zn(2+). In terms of processing, the N-terminus is blocked. Post-translationally, the precursor is cleaved by a furin endopeptidase. Glycosylated. Can be O-fucosylated by POFUT2 on a serine or a threonine residue found within the consensus sequence C1-X(2)-(S/T)-C2-G of the TSP type-1 repeat domains where C1 and C2 are the first and second cysteine residue of the repeat, respectively. Fucosylated repeats can then be further glycosylated by the addition of a beta-1,3-glucose residue by the glucosyltransferase, B3GALTL. Fucosylation mediates the efficient secretion of ADAMTS family members. Can also be C-glycosylated with one or two mannose molecules on tryptophan residues within the consensus sequence W-X-X-W of the TPRs, and N-glycosylated. These other glycosylations can also facilitate secretion. As to expression, enzymatic activity is detected at high level in all type I collagen-rich tissues such as skin, bones, tendons and aorta and at low level in brain and thymus. The mRNA levels were disproportionately high in heart, liver, retina and muscle.

Its subcellular location is the secreted. The protein localises to the extracellular space. It localises to the extracellular matrix. The catalysed reaction is Cleaves the N-propeptide of collagen chain alpha1(I) at Pro-|-Gln and of alpha1(II) and alpha2(I) at Ala-|-Gln.. Its function is as follows. Cleaves the propeptides of type I and II collagen prior to fibril assembly. Does not act on type III collagen. Cleaves lysyl oxidase LOX at a site downstream of its propeptide cleavage site to produce a short LOX form with reduced collagen-binding activity. This is A disintegrin and metalloproteinase with thrombospondin motifs 2 (ADAMTS2) from Bos taurus (Bovine).